The following is a 64-amino-acid chain: Alpha-conotoxin CnIL (64 aa).

An N-terminal signal peptide occupies residues 1–21; it reads MGMRMMFTVFLLVVLTTTVVS. Residues 22-49 constitute a propeptide that is removed on maturation; it reads FPSDSASDGRDDEAKDERSDIYESKRDG. Disulfide bonds link Cys51/Cys56 and Cys52/Cys62. Cysteine amide is present on Cys62.

It belongs to the conotoxin A superfamily. Expressed by the venom duct.

The protein localises to the secreted. The sequence is that of Alpha-conotoxin CnIL from Conus consors (Singed cone).